A 328-amino-acid polypeptide reads, in one-letter code: DNA-directed RNA polymerase subunit alpha (328 aa).

An alpha N-terminal domain (alpha-NTD) region spans residues 1–234; the sequence is MQTAVNEFLT…QQLAVFVDLE (234 aa). An alpha C-terminal domain (alpha-CTD) region spans residues 248–328; it reads IDPILLRPVD…NWPPASLKND (81 aa).

The protein belongs to the RNA polymerase alpha chain family. As to quaternary structure, homodimer. The RNAP catalytic core consists of 2 alpha, 1 beta, 1 beta' and 1 omega subunit. When a sigma factor is associated with the core the holoenzyme is formed, which can initiate transcription.

The enzyme catalyses RNA(n) + a ribonucleoside 5'-triphosphate = RNA(n+1) + diphosphate. DNA-dependent RNA polymerase catalyzes the transcription of DNA into RNA using the four ribonucleoside triphosphates as substrates. This Cellvibrio japonicus (strain Ueda107) (Pseudomonas fluorescens subsp. cellulosa) protein is DNA-directed RNA polymerase subunit alpha.